Reading from the N-terminus, the 393-residue chain is Phosphoenolpyruvate/phosphate translocator 3, chloroplastic (393 aa).

The transit peptide at 1 to 65 (MQRAAAASRA…LSGGRAVTAR (65 aa)) directs the protein to the chloroplast. 7 helical membrane-spanning segments follow: residues 89-109 (LAET…NIYF), 124-144 (YTIT…MWAL), 164-183 (AAGH…KVAV), 195-217 (FFTV…LGSL), 232-249 (LSFN…NLLY), 270-290 (INLF…LMLF), and 362-382 (TPIS…VFLY). The region spanning 123–228 (PYTITAFQLA…PIVGGVALAS (106 aa)) is the EamA domain.

Belongs to the TPT transporter family. PPT (TC 2.A.7.9) subfamily.

It localises to the plastid. The protein localises to the chloroplast membrane. Phosphoenolpyruvate/phosphate translocator that transports phosphoenolpyruvate (PEP) and dihydroxyacetone phosphate. The chain is Phosphoenolpyruvate/phosphate translocator 3, chloroplastic (PPT3) from Oryza sativa subsp. japonica (Rice).